The primary structure comprises 198 residues: WYSSMFAANIKQEPISHHHHHHHAHHSHHQHPHDSNSNSNASSPHQSPLPSPNPPSNTNLQLEQYLKQQQQQQQQQQQQQQQQPMDTLCAAAMTPSPSNNDQNSPLMLPGLPNPMQSIMLANLRPSPTTTTTTTTPAAAPTTTAATIALQANDKLQALTPPMDVTPPKSPAKSQQSCAEPEKEHDLMSNSSEDMKYMA.

Disordered regions lie at residues 16–111 and 152–198; these read SHHH…LPGL and NDKL…KYMA. Basic residues predominate over residues 17-31; the sequence is HHHHHHHAHHSHHQH. 2 stretches are compositionally biased toward low complexity: residues 35-46 and 56-83; these read SNSNSNASSPHQ and SNTNLQLEQYLKQQQQQQQQQQQQQQQQ. The span at 95–105 shows a compositional bias: polar residues; the sequence is PSPSNNDQNSP. Residues 179-198 are compositionally biased toward basic and acidic residues; the sequence is EPEKEHDLMSNSSEDMKYMA.

It belongs to the hunchback C2H2-type zinc-finger protein family.

It localises to the nucleus. In terms of biological role, gap class segmentation protein that controls development of head structures. This chain is Protein hunchback (hb), found in Drosophila lineosetae (Fruit fly).